Consider the following 373-residue polypeptide: Asporin (373 aa).

A signal peptide spans 1 to 15; the sequence is MKEYVMLLLLAVCSA. Residues 16 to 32 constitute a propeptide that is removed on maturation; sequence KPFFSPSHTALKNMMLK. Ser48 is a glycosylation site (O-linked (GalNAc...) serine). In terms of domain architecture, LRRNT spans 59 to 95; sequence FFPFDLFPTCPFGCQCYSRVVHCSDLGLTSVPNNIPF. Intrachain disulfides connect Cys68–Cys74 and Cys72–Cys81. LRR repeat units follow at residues 96–117, 120–141, 144–166, 167–186, 189–212, 235–255, 259–280, 283–305, 306–327, 328–349, and 350–373; these read DTRM…DFKG, SLYA…TFLT, KLRR…PKSL, AELR…TFKG, ALHV…AFEG, TLLE…EDLK, ELQR…TFAN, RVRE…QELK, YLQI…DFCP, TVPK…PMKY, and WEIQ…NVGK. The segment at 159–205 is interaction with TGFB1; sequence PLNLPKSLAELRIHDNKVKKIQKDTFKGMNALHVLEMSANPLENNGI. A glycan (N-linked (GlcNAc...) asparagine) is linked at Asn275. Cys326 and Cys359 form a disulfide bridge.

Belongs to the small leucine-rich proteoglycan (SLRP) family. SLRP class I subfamily. Interacts with type I collagen. DCN can inhibit collagen binding. Interacts with TGFB1, TGFB2 and TGFB3. DCN, BGN, and FMOD inhibit binding to TGFB1. Interacts with BMP2. Interacts in vitro with type II collagen. As to expression, higher expression in heart, also detected in kidney, stomach, testes, and skin but only weakly in lung, skeletal muscle, small intestine, and thymus. Expressed specifically and predominantly in the periodontal ligament (PDL). During tooth development, strong expression is seen in the dental follicle, which is the progenitor tissue that forms cementum, alveolar bone, and the PDL. Expressed in the perichondria of the maxilla, mandible, vertebrae, and long bones. Predominantly expressed in the perichondrium/periosteum of long bones (at protein level).

The protein localises to the secreted. Its subcellular location is the extracellular space. It is found in the extracellular matrix. Functionally, binds calcium and plays a role in osteoblast-driven collagen biomineralization activity. Critical regulator of TGF-beta in articular cartilage and plays an essential role in cartilage homeostasis and osteoarthritis (OA) pathogenesis. Negatively regulates chondrogenesis in the articular cartilage by blocking the TGF-beta/receptor interaction on the cell surface and inhibiting the canonical TGF-beta/Smad signal. Negatively regulates periodontal ligament (PDL) differentiation and mineralization to ensure that the PDL is not ossified and to maintain homeostasis of the tooth-supporting system. Inhibits BMP2-induced cytodifferentiation of PDL cells by preventing its binding to BMPR1B/BMP type-1B receptor, resulting in inhibition of BMP-dependent activation of SMAD proteins. Inhibits the interaction between TGFB1 and TGF-beta receptor type II in the presence of heparin/heparan sulfate in vitro. The sequence is that of Asporin (Aspn) from Mus musculus (Mouse).